Reading from the N-terminus, the 840-residue chain is Phosphatidylglycerol lysyltransferase (840 aa).

At 1–8 (MNQEVKNK) the chain is on the cytoplasmic side. A helical transmembrane segment spans residues 9–29 (IFSILKITFATALFIFVAITL). At 30-52 (YRELSGINFKDTLVEFSKINRMS) the chain is on the extracellular side. A helical membrane pass occupies residues 53–73 (LVLLFIGGGASLVILSMYDVI). At 74 to 89 (LSRALKMDISLGKVLR) the chain is on the cytoplasmic side. The helical transmembrane segment at 90 to 110 (VSYIINALNAIVGFGGFIGAG) threads the bilayer. The Extracellular portion of the chain corresponds to 111-128 (VRAMVYKNYTHDKKKLVH). The helical transmembrane segment at 129–149 (FISLILISMLTGLSLLSLLIV) threads the bilayer. Over 150 to 161 (FHVFDASLILDK) the chain is Cytoplasmic. A helical membrane pass occupies residues 162–182 (ITWVRWVLYVVSFFLPLFIIY). The Extracellular segment spans residues 183–200 (SMVRPPDKNNRFVGLYCT). The chain crosses the membrane as a helical span at residues 201-221 (LVSCVEWLAAAVVLYFCGVIV). At 222–229 (DAHVSFMS) the chain is on the cytoplasmic side. Residues 230 to 250 (FIAIFIIAALSGLVSFIPGGF) traverse the membrane as a helical segment. Topologically, residues 251 to 271 (GAFDLVVLLGFKTLGVPEEKV) are extracellular. A helical transmembrane segment spans residues 272–292 (LLMLLLYRFAYYFVPVIIALI). The Cytoplasmic segment spans residues 293–337 (LSSFEFGTSAKKYIEGSKYFIPAKDVTSFLMSYQKDIIAKIPSLS). Residues 338–358 (LAILVFFTSMIFFVNNLTIVY) traverse the membrane as a helical segment. The Extracellular portion of the chain corresponds to 359-369 (DALYDGNHLTY). The chain crosses the membrane as a helical span at residues 370 to 390 (YILLAIHTSACLLLLLNVVGI). Residues 391–394 (YKQS) lie on the Cytoplasmic side of the membrane. 2 helical membrane-spanning segments follow: residues 395–415 (RRAI…TFFT) and 416–436 (YASY…IVAF). Residues 437–450 (RRARRLKRPVRMRN) are Cytoplasmic-facing. The helical transmembrane segment at 451-471 (IVAMLLFSLFILYVNHIFIAG) threads the bilayer. Residues 472–489 (TLYALDIYTIEMHTSVLR) are Extracellular-facing. The chain crosses the membrane as a helical span at residues 490 to 510 (YYFWLTILIIAIIIGMIAWLF). The Cytoplasmic portion of the chain corresponds to 511–840 (DYQFSKVRIS…SKVMRVIRHK (330 aa)).

This sequence belongs to the LPG synthase family.

It is found in the cell membrane. It catalyses the reaction L-lysyl-tRNA(Lys) + a 1,2-diacyl-sn-glycero-3-phospho-(1'-sn-glycerol) = a 1,2-diacyl-sn-glycero-3-phospho-1'-(3'-O-L-lysyl)-sn-glycerol + tRNA(Lys). Functionally, catalyzes the transfer of a lysyl group from L-lysyl-tRNA(Lys) to membrane-bound phosphatidylglycerol (PG), which produces lysylphosphatidylglycerol (LPG), a major component of the bacterial membrane with a positive net charge. LPG synthesis contributes to bacterial virulence as it is involved in the resistance mechanism against cationic antimicrobial peptides (CAMP) produces by the host's immune system (defensins, cathelicidins) and by the competing microorganisms (bacteriocins). In fact, the modification of anionic phosphatidylglycerol with positively charged L-lysine results in repulsion of the peptides. The chain is Phosphatidylglycerol lysyltransferase (mprF) from Staphylococcus aureus (strain Mu50 / ATCC 700699).